The following is a 236-amino-acid chain: uncharacterized protein (236 aa).

The chain crosses the membrane as a helical span at residues 52 to 72 (FFPYIALFQIIMLIILLILYF). Positions 183-236 (SDKREHDDEELSFTTEMETITTETETSSTIPHLRSLPIKSESSMETTSEETDEE) are disordered. The segment covering 196–212 (TTEMETITTETETSSTI) has biased composition (low complexity).

The protein resides in the membrane. This is an uncharacterized protein from Acheta domesticus (House cricket).